Here is a 257-residue protein sequence, read N- to C-terminus: Imidazole glycerol phosphate synthase subunit HisF (257 aa).

Residues aspartate 12 and aspartate 131 contribute to the active site.

It belongs to the HisA/HisF family. As to quaternary structure, heterodimer of HisH and HisF.

Its subcellular location is the cytoplasm. The enzyme catalyses 5-[(5-phospho-1-deoxy-D-ribulos-1-ylimino)methylamino]-1-(5-phospho-beta-D-ribosyl)imidazole-4-carboxamide + L-glutamine = D-erythro-1-(imidazol-4-yl)glycerol 3-phosphate + 5-amino-1-(5-phospho-beta-D-ribosyl)imidazole-4-carboxamide + L-glutamate + H(+). The protein operates within amino-acid biosynthesis; L-histidine biosynthesis; L-histidine from 5-phospho-alpha-D-ribose 1-diphosphate: step 5/9. IGPS catalyzes the conversion of PRFAR and glutamine to IGP, AICAR and glutamate. The HisF subunit catalyzes the cyclization activity that produces IGP and AICAR from PRFAR using the ammonia provided by the HisH subunit. In Mycobacteroides abscessus (strain ATCC 19977 / DSM 44196 / CCUG 20993 / CIP 104536 / JCM 13569 / NCTC 13031 / TMC 1543 / L948) (Mycobacterium abscessus), this protein is Imidazole glycerol phosphate synthase subunit HisF.